The sequence spans 431 residues: Na(+)/H(+) antiporter NhaA (431 aa).

11 consecutive transmembrane segments (helical) span residues 33–53, 74–94, 112–132, 144–164, 173–193, 197–217, 225–245, 279–299, 311–331, 347–367, and 379–399; these read VGGALLLVAALAALVWANSPW, LSISAWAADGLLAIFFFVVGV, ALPIAAAVGGMIVPAVIFVGV, GWAIPVATDIAFALAVLAVIA, IFLLTLAVVDDLLAIIVIAVF, QLSFGPLAGALVTIAVFGLAV, FLLLPLAVVAWALMHASGVHA, FAVPVFAFFAAGVTVGGLSGF, VIAGLVLGKPIGVFLTTYVLA, VLGLALLAGIGFTVSLLIGEL, and AKIAVLTGSVLAGLLAAVVLL.

It belongs to the NhaA Na(+)/H(+) (TC 2.A.33) antiporter family.

It is found in the cell membrane. It catalyses the reaction Na(+)(in) + 2 H(+)(out) = Na(+)(out) + 2 H(+)(in). In terms of biological role, na(+)/H(+) antiporter that extrudes sodium in exchange for external protons. This chain is Na(+)/H(+) antiporter NhaA, found in Mycolicibacterium smegmatis (strain ATCC 700084 / mc(2)155) (Mycobacterium smegmatis).